The chain runs to 177 residues: Dual-action ribosomal maturation protein DarP (177 aa).

The tract at residues 1–26 (MKIVGDSEHFKQPYDSDEEYVSKTED) is disordered.

Belongs to the DarP family.

It localises to the cytoplasm. Member of a network of 50S ribosomal subunit biogenesis factors which assembles along the 30S-50S interface, preventing incorrect 23S rRNA structures from forming. Promotes peptidyl transferase center (PTC) maturation. This Shewanella sp. (strain ANA-3) protein is Dual-action ribosomal maturation protein DarP.